The following is a 432-amino-acid chain: Tryptophan--tRNA ligase, cytoplasmic (432 aa).

The 'HIGH' region signature appears at 111 to 120 (PSSDSMHLGH). A 'KMSKS' region motif is present at residues 295–299 (KMSAS).

This sequence belongs to the class-I aminoacyl-tRNA synthetase family. In terms of assembly, homodimer.

It localises to the cytoplasm. It carries out the reaction tRNA(Trp) + L-tryptophan + ATP = L-tryptophyl-tRNA(Trp) + AMP + diphosphate + H(+). In Saccharomyces cerevisiae (strain ATCC 204508 / S288c) (Baker's yeast), this protein is Tryptophan--tRNA ligase, cytoplasmic (WRS1).